The sequence spans 320 residues: Ribose-phosphate pyrophosphokinase (320 aa).

Residues 43–45 (DGE) and 102–103 (RQ) contribute to the ATP site. Positions 136 and 178 each coordinate Mg(2+). K201 is a catalytic residue. Residues R203, D227, and 231-235 (DTAGT) contribute to the D-ribose 5-phosphate site.

It belongs to the ribose-phosphate pyrophosphokinase family. Class I subfamily. As to quaternary structure, homohexamer. Requires Mg(2+) as cofactor.

Its subcellular location is the cytoplasm. It catalyses the reaction D-ribose 5-phosphate + ATP = 5-phospho-alpha-D-ribose 1-diphosphate + AMP + H(+). The protein operates within metabolic intermediate biosynthesis; 5-phospho-alpha-D-ribose 1-diphosphate biosynthesis; 5-phospho-alpha-D-ribose 1-diphosphate from D-ribose 5-phosphate (route I): step 1/1. Its function is as follows. Involved in the biosynthesis of the central metabolite phospho-alpha-D-ribosyl-1-pyrophosphate (PRPP) via the transfer of pyrophosphoryl group from ATP to 1-hydroxyl of ribose-5-phosphate (Rib-5-P). The polypeptide is Ribose-phosphate pyrophosphokinase (Clostridium tetani (strain Massachusetts / E88)).